Consider the following 211-residue polypeptide: Ribonuclease P protein component 3 (211 aa).

Belongs to the eukaryotic/archaeal RNase P protein component 3 family. In terms of assembly, consists of a catalytic RNA component and at least 4-5 protein subunits.

The protein resides in the cytoplasm. It catalyses the reaction Endonucleolytic cleavage of RNA, removing 5'-extranucleotides from tRNA precursor.. Part of ribonuclease P, a protein complex that generates mature tRNA molecules by cleaving their 5'-ends. This chain is Ribonuclease P protein component 3, found in Aeropyrum pernix (strain ATCC 700893 / DSM 11879 / JCM 9820 / NBRC 100138 / K1).